The following is a 558-amino-acid chain: T-complex protein 1 subunit gamma (558 aa).

A disulfide bond links Cys-381 and Cys-387.

This sequence belongs to the TCP-1 chaperonin family. As to quaternary structure, heterooligomeric complex of about 850 to 900 kDa that forms two stacked rings, 12 to 16 nm in diameter.

It localises to the cytoplasm. Its function is as follows. Molecular chaperone; assists the folding of proteins upon ATP hydrolysis. Known to play a role, in vitro, in the folding of actin and tubulin. This is T-complex protein 1 subunit gamma from Thalassiosira weissflogii (Marine diatom).